Reading from the N-terminus, the 364-residue chain is Methylthioribose-1-phosphate isomerase (364 aa).

Substrate contacts are provided by residues 53 to 55 (RGA), Arg90, and Gln203. Residue Asp244 is the Proton donor of the active site. 254-255 (NK) provides a ligand contact to substrate.

Belongs to the eIF-2B alpha/beta/delta subunits family. MtnA subfamily.

It carries out the reaction 5-(methylsulfanyl)-alpha-D-ribose 1-phosphate = 5-(methylsulfanyl)-D-ribulose 1-phosphate. The protein operates within amino-acid biosynthesis; L-methionine biosynthesis via salvage pathway; L-methionine from S-methyl-5-thio-alpha-D-ribose 1-phosphate: step 1/6. Catalyzes the interconversion of methylthioribose-1-phosphate (MTR-1-P) into methylthioribulose-1-phosphate (MTRu-1-P). The chain is Methylthioribose-1-phosphate isomerase from Rhizobium meliloti (strain 1021) (Ensifer meliloti).